The following is a 133-amino-acid chain: ATP synthase epsilon chain (133 aa).

It belongs to the ATPase epsilon chain family. As to quaternary structure, F-type ATPases have 2 components, CF(1) - the catalytic core - and CF(0) - the membrane proton channel. CF(1) has five subunits: alpha(3), beta(3), gamma(1), delta(1), epsilon(1). CF(0) has three main subunits: a, b and c.

It is found in the cell membrane. Produces ATP from ADP in the presence of a proton gradient across the membrane. This chain is ATP synthase epsilon chain, found in Clostridium botulinum (strain ATCC 19397 / Type A).